The chain runs to 461 residues: Photosystem II CP43 reaction center protein (461 aa).

The propeptide occupies 1 to 2; the sequence is ME. Thr-3 is subject to N-acetylthreonine. At Thr-3 the chain carries Phosphothreonine. Transmembrane regions (helical) follow at residues 57-81, 122-143, 166-188, 243-263, and 279-300; these read LFEV…PHLA, LIGP…KDKS, KSVY…RKIT, KPFA…LSYS, and WFNN…ASQA. Position 355 (Glu-355) interacts with [CaMn4O5] cluster. The helical transmembrane segment at 435–459 threads the bilayer; sequence RARAAAAGFEKGIDRDTEPVLSMTP.

The protein belongs to the PsbB/PsbC family. PsbC subfamily. As to quaternary structure, PSII is composed of 1 copy each of membrane proteins PsbA, PsbB, PsbC, PsbD, PsbE, PsbF, PsbH, PsbI, PsbJ, PsbK, PsbL, PsbM, PsbT, PsbX, PsbY, PsbZ, Psb30/Ycf12, at least 3 peripheral proteins of the oxygen-evolving complex and a large number of cofactors. It forms dimeric complexes. It depends on Binds multiple chlorophylls and provides some of the ligands for the Ca-4Mn-5O cluster of the oxygen-evolving complex. It may also provide a ligand for a Cl- that is required for oxygen evolution. PSII binds additional chlorophylls, carotenoids and specific lipids. as a cofactor.

The protein localises to the plastid. Its subcellular location is the chloroplast thylakoid membrane. In terms of biological role, one of the components of the core complex of photosystem II (PSII). It binds chlorophyll and helps catalyze the primary light-induced photochemical processes of PSII. PSII is a light-driven water:plastoquinone oxidoreductase, using light energy to abstract electrons from H(2)O, generating O(2) and a proton gradient subsequently used for ATP formation. This Psilotum nudum (Whisk fern) protein is Photosystem II CP43 reaction center protein.